A 379-amino-acid polypeptide reads, in one-letter code: NADH-quinone oxidoreductase subunit D 2 (379 aa).

Belongs to the complex I 49 kDa subunit family. In terms of assembly, NDH-1 is composed of 14 different subunits. Subunits NuoB, C, D, E, F, and G constitute the peripheral sector of the complex.

The protein localises to the cell inner membrane. The enzyme catalyses a quinone + NADH + 5 H(+)(in) = a quinol + NAD(+) + 4 H(+)(out). Its function is as follows. NDH-1 shuttles electrons from NADH, via FMN and iron-sulfur (Fe-S) centers, to quinones in the respiratory chain. The immediate electron acceptor for the enzyme in this species is believed to be ubiquinone. Couples the redox reaction to proton translocation (for every two electrons transferred, four hydrogen ions are translocated across the cytoplasmic membrane), and thus conserves the redox energy in a proton gradient. The polypeptide is NADH-quinone oxidoreductase subunit D 2 (Anaeromyxobacter dehalogenans (strain 2CP-C)).